Reading from the N-terminus, the 213-residue chain is Charged multivesicular body protein 2b (213 aa).

Ala2 is modified (N-acetylalanine). Residues 25–55 (QRAIIRDRAALEKQEKQLELEIKKMAKIGNK) are a coiled coil. The interval 178–202 (MAKAPSAARSLPSASTSKSTISDEE) is disordered. Residues 179-194 (AKAPSAARSLPSASTS) show a composition bias toward low complexity. Position 199 is a phosphoserine (Ser199). The short motif at 201–211 (EEIERQLKALG) is the MIT-interacting motif element.

This sequence belongs to the SNF7 family. In terms of assembly, probable core component of the endosomal sorting required for transport complex III (ESCRT-III). ESCRT-III components are thought to multimerize to form a flat lattice on the perimeter membrane of the endosome. Several assembly forms of ESCRT-III may exist that interact and act sequentially. Interacts with CHMP2A. Interacts with VPS4A. Interacts with VPS4B; the interaction is direct.

The protein resides in the cytoplasm. Its subcellular location is the cytosol. The protein localises to the late endosome membrane. Probable core component of the endosomal sorting required for transport complex III (ESCRT-III) which is involved in multivesicular bodies (MVBs) formation and sorting of endosomal cargo proteins into MVBs. MVBs contain intraluminal vesicles (ILVs) that are generated by invagination and scission from the limiting membrane of the endosome and mostly are delivered to lysosomes enabling degradation of membrane proteins, such as stimulated growth factor receptors, lysosomal enzymes and lipids. The MVB pathway appears to require the sequential function of ESCRT-O, -I,-II and -III complexes. ESCRT-III proteins mostly dissociate from the invaginating membrane before the ILV is released. The ESCRT machinery also functions in topologically equivalent membrane fission events, such as the terminal stages of cytokinesis and the budding of enveloped viruses (lentiviruses). ESCRT-III proteins are believed to mediate the necessary vesicle extrusion and/or membrane fission activities, possibly in conjunction with the AAA ATPase VPS4. The protein is Charged multivesicular body protein 2b (CHMP2B) of Bos taurus (Bovine).